A 961-amino-acid polypeptide reads, in one-letter code: ATPase 7, plasma membrane-type (961 aa).

The Cytoplasmic segment spans residues 1–64 (MTDIEALKAI…EKKESKILKF (64 aa)). A helical transmembrane segment spans residues 65–84 (LGFMWNPLSWVMEAAALMAI). The Extracellular segment spans residues 85-96 (GLAHGGGKPADY). A helical membrane pass occupies residues 97–117 (HDFVGIVVLLLINSTISFVEE). Residues 118-246 (NNAGNAAAAL…GHFQKVLTAI (129 aa)) are Cytoplasmic-facing. Residues 247–267 (GNFCICSIAVGMAIEIVVIYG) form a helical membrane-spanning segment. The Extracellular portion of the chain corresponds to 268-276 (LQKRGYRVG). Residues 277-294 (IDNLLVLLIGGIPIAMPT) form a helical membrane-spanning segment. At 295-643 (VLSVTMAIGA…TSRAIFQRMK (349 aa)) the chain is on the cytoplasmic side. Aspartate 332 (4-aspartylphosphate intermediate) is an active-site residue. The Mg(2+) site is built by aspartate 588 and aspartate 592. A helical membrane pass occupies residues 644 to 665 (NYTIYAVSITIRIVMGFMLLCV). The Extracellular segment spans residues 666–670 (FWEFD). The chain crosses the membrane as a helical span at residues 671–693 (FPPFMVLVIAILNDGTIMTISKD). The Cytoplasmic segment spans residues 694-709 (RVKPSPTPDCWKLKEI). A helical transmembrane segment spans residues 710–730 (FATGVVLGAYLAIMTVVFFWA). Residues 731 to 764 (AYETNFFHNIFHVRNFNQHHFKMKDKKVAAHLNE) lie on the Extracellular side of the membrane. Residues 765-785 (QMASAVYLQVSTISQALIFVT) traverse the membrane as a helical segment. Residues 786–797 (RSRSWSFVERPG) are Cytoplasmic-facing. Residues 798-818 (FLLVIAFLIAQLVASVISAMA) traverse the membrane as a helical segment. The Extracellular portion of the chain corresponds to 819 to 826 (NWPFAGIR). Residues 827-847 (SIGWGWTGVIWIFNIVTYMLL) traverse the membrane as a helical segment. The Cytoplasmic portion of the chain corresponds to 848–961 (DPIKFLVRYA…EDPNSNNYTI (114 aa)). A Phosphothreonine modification is found at threonine 894. Residues serine 910 and serine 942 each carry the phosphoserine modification. Residues 959–961 (YTI) form an interaction with 14-3-3 proteins region. Threonine 960 bears the Phosphothreonine mark.

The protein belongs to the cation transport ATPase (P-type) (TC 3.A.3) family. Type IIIA subfamily. As to quaternary structure, binds to 14-3-3 proteins. The binding is induced by phosphorylation of Thr-960. Binding to 14-3-3 proteins activates the H(+)-ATPase. As to expression, expressed in guard cells, roots and leaves, and barely in mesophyll cells.

The protein resides in the membrane. The catalysed reaction is ATP + H2O + H(+)(in) = ADP + phosphate + 2 H(+)(out). The plasma membrane H(+) ATPase of plants and fungi generates a proton gradient that drives the active transport of nutrients by H(+)-symport. The resulting external acidification and/or internal alkinization may mediate growth responses. This chain is ATPase 7, plasma membrane-type (AHA7), found in Arabidopsis thaliana (Mouse-ear cress).